A 140-amino-acid polypeptide reads, in one-letter code: GTP-dependent dephospho-CoA kinase (140 aa).

6 residues coordinate GTP: Asp21, Val22, Val23, Asp40, Lys42, and Glu92.

This sequence belongs to the GTP-dependent DPCK family.

The enzyme catalyses 3'-dephospho-CoA + GTP = GDP + CoA + H(+). It functions in the pathway cofactor biosynthesis; coenzyme A biosynthesis. Its function is as follows. Catalyzes the GTP-dependent phosphorylation of the 3'-hydroxyl group of dephosphocoenzyme A to form coenzyme A (CoA). The protein is GTP-dependent dephospho-CoA kinase of Pyrobaculum aerophilum (strain ATCC 51768 / DSM 7523 / JCM 9630 / CIP 104966 / NBRC 100827 / IM2).